A 508-amino-acid polypeptide reads, in one-letter code: Photosystem II CP47 reaction center protein (508 aa).

The next 6 membrane-spanning stretches (helical) occupy residues 21–36, 101–115, 140–156, 203–218, 237–252, and 457–472; these read AVHIMHTALVSGWAGS, IVFSGLCFLAAIWHW, GIHLFLAGVACFGFGAF, IAAGTLGILAGLFHLS, VLSSSIAAVFFAAFVV, and TFALLFFFGHIWHGAR.

The protein belongs to the PsbB/PsbC family. PsbB subfamily. In terms of assembly, PSII is composed of 1 copy each of membrane proteins PsbA, PsbB, PsbC, PsbD, PsbE, PsbF, PsbH, PsbI, PsbJ, PsbK, PsbL, PsbM, PsbT, PsbX, PsbY, PsbZ, Psb30/Ycf12, at least 3 peripheral proteins of the oxygen-evolving complex and a large number of cofactors. It forms dimeric complexes. The cofactor is Binds multiple chlorophylls. PSII binds additional chlorophylls, carotenoids and specific lipids..

It is found in the plastid. The protein localises to the chloroplast thylakoid membrane. Functionally, one of the components of the core complex of photosystem II (PSII). It binds chlorophyll and helps catalyze the primary light-induced photochemical processes of PSII. PSII is a light-driven water:plastoquinone oxidoreductase, using light energy to abstract electrons from H(2)O, generating O(2) and a proton gradient subsequently used for ATP formation. The polypeptide is Photosystem II CP47 reaction center protein (Brachypodium distachyon (Purple false brome)).